An 876-amino-acid chain; its full sequence is Alanine--tRNA ligase (876 aa).

At K74 the chain carries N6-acetyllysine. 4 residues coordinate Zn(2+): H564, H568, C666, and H670.

The protein belongs to the class-II aminoacyl-tRNA synthetase family. Homotetramer. Zn(2+) serves as cofactor.

It localises to the cytoplasm. It carries out the reaction tRNA(Ala) + L-alanine + ATP = L-alanyl-tRNA(Ala) + AMP + diphosphate. Its function is as follows. Catalyzes the attachment of alanine to tRNA(Ala) in a two-step reaction: alanine is first activated by ATP to form Ala-AMP and then transferred to the acceptor end of tRNA(Ala). Also edits incorrectly charged Ser-tRNA(Ala) and Gly-tRNA(Ala) via its editing domain. This chain is Alanine--tRNA ligase, found in Escherichia coli O9:H4 (strain HS).